We begin with the raw amino-acid sequence, 222 residues long: uncharacterized protein (222 aa).

One can recognise an HTH gntR-type domain in the interval alanine 8 to aspartate 77.

This is an uncharacterized protein from Mycoplasma genitalium (strain ATCC 33530 / DSM 19775 / NCTC 10195 / G37) (Mycoplasmoides genitalium).